We begin with the raw amino-acid sequence, 218 residues long: Large ribosomal subunit protein uL3 (218 aa).

Residues 121 to 163 (GYQKRHGFSRGPMTHGSKNHREPGSIGPGTTPGRIYPGKRMAG) form a disordered region.

The protein belongs to the universal ribosomal protein uL3 family. In terms of assembly, part of the 50S ribosomal subunit. Forms a cluster with proteins L14 and L19.

Functionally, one of the primary rRNA binding proteins, it binds directly near the 3'-end of the 23S rRNA, where it nucleates assembly of the 50S subunit. This is Large ribosomal subunit protein uL3 from Parasynechococcus marenigrum (strain WH8102).